The primary structure comprises 463 residues: Mitochondrial dynamics protein MID51 (463 aa).

The Mitochondrial intermembrane segment spans residues 1 to 23; the sequence is MAGAGERKGKKDDNGIGTAIDFV. The chain crosses the membrane as a helical span at residues 24 to 46; it reads LSNARLVLGVGGAAMLGIATLAV. The Cytoplasmic segment spans residues 47-463; it reads KRMYDRAISA…LSEPEVLLQT (417 aa). Residues 49 to 195 are dimerization; it reads MYDRAISAPT…LSGSLYDDLQ (147 aa). Phosphoserine is present on residues S55, S59, S79, and S94. The disordered stretch occupies residues 57-77; it reads PTSPTRLSHSGKRSWEEPNWM. The segment at 160 to 169 is important for interaction with DNM1L; the sequence is AAVDICAELR. 3 residues coordinate ADP: S187, S189, and H201. An important for interaction with DNM1L region spans residues 234–243; that stretch reads RRENPEYFPR. S340, R342, and K368 together coordinate ADP.

This sequence belongs to the MID49/MID51 family. As to quaternary structure, homodimer. Interacts with DNM1L.

It localises to the mitochondrion outer membrane. Functionally, mitochondrial outer membrane protein which regulates mitochondrial fission/fusion dynamics. Promotes the recruitment and association of the fission mediator dynamin-related protein 1 (DNM1L) to the mitochondrial surface independently of the mitochondrial fission FIS1 and MFF proteins. Regulates DNM1L GTPase activity and DNM1L oligomerization. Binds ADP and can also bind GDP, although with lower affinity. Does not bind CDP, UDP, ATP, AMP or GTP. Inhibits DNM1L GTPase activity in the absence of bound ADP. Requires ADP to stimulate DNM1L GTPase activity and the assembly of DNM1L into long, oligomeric tubules with a spiral pattern, as opposed to the ring-like DNM1L oligomers observed in the absence of bound ADP. Does not require ADP for its function in recruiting DNM1L. This chain is Mitochondrial dynamics protein MID51 (Mief1), found in Mus musculus (Mouse).